The sequence spans 446 residues: Zinc finger protein 19 (446 aa).

The 72-residue stretch at 2–73 (VTFEDVAVHF…EAQDDPPAET (72 aa)) folds into the KRAB domain. 9 C2H2-type zinc fingers span residues 149–171 (FICEECGKSFSYFSYYARHQRIH), 177–199 (FECSECGKAFNGNSSLIRHQRIH), 205–227 (YQCEECGRAFNDNANLIRHQRIH), 233–255 (YYCTECGNSFTSSSEFVIHQRIH), 261–283 (YECNECGKAFVGNSPLLRHQKIH), 289–311 (YECNECGKSFGRTSHLSQHQRIH), 317–339 (YSCKVCGQAFNFHTKLTRHQRIH), 345–367 (FDCVDCGKAFSAQEQLKRHLRIH), and 373–395 (YVCDECGKAFTSKRNLHQHQRIH). The segment at 401–423 (YEYSKYEKAFGTSSQLGHLEHVH) adopts a C2H2-type 10; degenerate zinc-finger fold.

It belongs to the krueppel C2H2-type zinc-finger protein family.

It is found in the nucleus. Its function is as follows. May be involved in transcriptional regulation. The polypeptide is Zinc finger protein 19 (ZNF19) (Pongo abelii (Sumatran orangutan)).